Here is a 561-residue protein sequence, read N- to C-terminus: Formate--tetrahydrofolate ligase (561 aa).

70–77 (TPAGEGKT) serves as a coordination point for ATP.

This sequence belongs to the formate--tetrahydrofolate ligase family.

The catalysed reaction is (6S)-5,6,7,8-tetrahydrofolate + formate + ATP = (6R)-10-formyltetrahydrofolate + ADP + phosphate. It functions in the pathway one-carbon metabolism; tetrahydrofolate interconversion. The protein is Formate--tetrahydrofolate ligase of Pelagibacter ubique (strain HTCC1062).